Consider the following 514-residue polypeptide: Light-independent protochlorophyllide reductase subunit B (514 aa).

[4Fe-4S] cluster is bound at residue aspartate 36. The active-site Proton donor is the aspartate 300. Residue 435-436 (GM) coordinates substrate.

This sequence belongs to the ChlB/BchB/BchZ family. Protochlorophyllide reductase is composed of three subunits; ChlL, ChlN and ChlB. Forms a heterotetramer of two ChlB and two ChlN subunits. Requires [4Fe-4S] cluster as cofactor.

It is found in the plastid. Its subcellular location is the chloroplast. It catalyses the reaction chlorophyllide a + oxidized 2[4Fe-4S]-[ferredoxin] + 2 ADP + 2 phosphate = protochlorophyllide a + reduced 2[4Fe-4S]-[ferredoxin] + 2 ATP + 2 H2O. It participates in porphyrin-containing compound metabolism; chlorophyll biosynthesis (light-independent). Its function is as follows. Component of the dark-operative protochlorophyllide reductase (DPOR) that uses Mg-ATP and reduced ferredoxin to reduce ring D of protochlorophyllide (Pchlide) to form chlorophyllide a (Chlide). This reaction is light-independent. The NB-protein (ChlN-ChlB) is the catalytic component of the complex. The chain is Light-independent protochlorophyllide reductase subunit B from Pleurastrum terricola (Filamentous green alga).